Reading from the N-terminus, the 668-residue chain is UvrABC system protein B (668 aa).

Residues 25 to 413 enclose the Helicase ATP-binding domain; it reads NGINTGLQHQ…QNTVQQVIRP (389 aa). 38–45 is an ATP binding site; that stretch reads GVTGSGKT. Residues 91 to 114 carry the Beta-hairpin motif; the sequence is YYDYYQPEAYIAASDTYIEKDSSV. Residues 429–595 enclose the Helicase C-terminal domain; it reads QVEDALSEIN…TIIKNIDDML (167 aa). Residues 629–664 enclose the UVR domain; it reads TKVIKALEKRMRAYAKELEFEKATTIRDKITEVKQK.

It belongs to the UvrB family. In terms of assembly, forms a heterotetramer with UvrA during the search for lesions. Interacts with UvrC in an incision complex.

It localises to the cytoplasm. In terms of biological role, the UvrABC repair system catalyzes the recognition and processing of DNA lesions. A damage recognition complex composed of 2 UvrA and 2 UvrB subunits scans DNA for abnormalities. Upon binding of the UvrA(2)B(2) complex to a putative damaged site, the DNA wraps around one UvrB monomer. DNA wrap is dependent on ATP binding by UvrB and probably causes local melting of the DNA helix, facilitating insertion of UvrB beta-hairpin between the DNA strands. Then UvrB probes one DNA strand for the presence of a lesion. If a lesion is found the UvrA subunits dissociate and the UvrB-DNA preincision complex is formed. This complex is subsequently bound by UvrC and the second UvrB is released. If no lesion is found, the DNA wraps around the other UvrB subunit that will check the other stand for damage. In Francisella tularensis subsp. tularensis (strain SCHU S4 / Schu 4), this protein is UvrABC system protein B.